The following is a 102-amino-acid chain: Movement protein (102 aa).

Residues 43 to 63 traverse the membrane as a helical segment; the sequence is VVALIVILFAVGIVYLAYTLF. The segment at 82 to 102 is disordered; it reads IGFGNTPLRRPGEGNPNGGPV.

It belongs to the mastrevirus movement protein family. As to quaternary structure, interacts with the capsid protein (CP). Part of a MP-CP-viral DNA complex.

It localises to the host membrane. In terms of biological role, involved in the viral transport within, and between cells. In Tobacco yellow dwarf virus (strain Australia) (TYDV), this protein is Movement protein.